The primary structure comprises 56 residues: Large ribosomal subunit protein bL32 (56 aa).

Residues 1-39 (MAVQQNKKSRSKRGMRRSHDSLSTAQLSVDATSGELHRR) form a disordered region. The segment covering 7–16 (KKSRSKRGMR) has biased composition (basic residues). Residues 21-31 (SLSTAQLSVDA) are compositionally biased toward polar residues.

This sequence belongs to the bacterial ribosomal protein bL32 family.

The polypeptide is Large ribosomal subunit protein bL32 (Shewanella piezotolerans (strain WP3 / JCM 13877)).